The chain runs to 536 residues: Probable protein S-acyltransferase 23 (536 aa).

A disordered region spans residues 1 to 23; the sequence is MDSSEIEVVPLDSNSHQSPTESP. Over residues 12–23 the composition is skewed to polar residues; that stretch reads DSNSHQSPTESP. ANK repeat units lie at residues 57–86, 90–119, 123–153, 157–186, 190–219, and 225–254; these read NGFYALQWAALNNSLHVAQYIIQHGGDVNS, IQQTPLHWAAVKGSIDVADLLLQHGARIEA, NGFRAVHVASQYGQTAFVNHIIVDYAADYNA, EGRSPLHWAAYNGFTETVRLLLFRDACQNR, TGCTPLHWAVIKENVEACTLLVHAGTKEEL, and TGSTPLKLASDKGHRQLALFLSKAMRTRKN. The next 2 membrane-spanning stretches (helical) occupy residues 270-290 and 298-318; these read YAPMLFSLIVILMVLFITSIV and ITAMVGLWACFGLSCGVYALI. The DHHC domain occupies 363 to 413; it reads QLCPTCKIIRPVRSKHCPTCKRCVEQFDHHCPWISNCVGKKNKRYFLVFVI. Cysteine 393 acts as the S-palmitoyl cysteine intermediate in catalysis. A run of 2 helical transmembrane segments spans residues 407 to 427 and 454 to 474; these read YFLVFVIMGALTSFVGGTTAV and AAVFLFFDLLIFIATMTLTIS.

The protein belongs to the DHHC palmitoyltransferase family. Expressed in roots, shoots, flowers and pollen.

The protein resides in the golgi apparatus membrane. It catalyses the reaction L-cysteinyl-[protein] + hexadecanoyl-CoA = S-hexadecanoyl-L-cysteinyl-[protein] + CoA. Palmitoyl acyltransferase. In Arabidopsis thaliana (Mouse-ear cress), this protein is Probable protein S-acyltransferase 23 (PAT23).